A 209-amino-acid chain; its full sequence is Large ribosomal subunit protein uL3 (209 aa).

A disordered region spans residues His126–Arg165.

The protein belongs to the universal ribosomal protein uL3 family. In terms of assembly, part of the 50S ribosomal subunit. Forms a cluster with proteins L14 and L19.

Functionally, one of the primary rRNA binding proteins, it binds directly near the 3'-end of the 23S rRNA, where it nucleates assembly of the 50S subunit. In Chlorobium limicola (strain DSM 245 / NBRC 103803 / 6330), this protein is Large ribosomal subunit protein uL3.